We begin with the raw amino-acid sequence, 171 residues long: UPF0303 protein YPK_1581 (171 aa).

It belongs to the UPF0303 family.

This Yersinia pseudotuberculosis serotype O:3 (strain YPIII) protein is UPF0303 protein YPK_1581.